The chain runs to 244 residues: MEKVNFFEEVEKTLNISFNDKELIDTALTHSSYANGKKGVKFNERMEFLGDSVLQLCISEYLFLIYKSKSEGELTKKRSLIVCENSLYEVAKKWNIGKYIKMSKGEEITGGRERTSILANCVEAIIAAIYIDSGYKKTKQFIIDNFKDIIEKAIKNQIVLDYKTNLQEIVQQDGDIHIEYMLIKYEGPPHRRKFYTKVCVANNVMGSGVGYTKKESEQNAAQDALKKLKSEDKWNKEGIDTNEK.

The region spanning 7–134 (FEEVEKTLNI…IIAAIYIDSG (128 aa)) is the RNase III domain. Residue glutamate 47 coordinates Mg(2+). Aspartate 51 is a catalytic residue. Mg(2+) is bound by residues asparagine 120 and glutamate 123. The active site involves glutamate 123. Positions 161 to 230 (DYKTNLQEIV…AQDALKKLKS (70 aa)) constitute a DRBM domain.

This sequence belongs to the ribonuclease III family. In terms of assembly, homodimer. Mg(2+) serves as cofactor.

The protein resides in the cytoplasm. The catalysed reaction is Endonucleolytic cleavage to 5'-phosphomonoester.. Digests double-stranded RNA. Involved in the processing of primary rRNA transcript to yield the immediate precursors to the large and small rRNAs (23S and 16S). Processes some mRNAs, and tRNAs when they are encoded in the rRNA operon. Processes pre-crRNA and tracrRNA of type II CRISPR loci if present in the organism. This Clostridium kluyveri (strain NBRC 12016) protein is Ribonuclease 3.